A 752-amino-acid polypeptide reads, in one-letter code: Reticulon-1-B (752 aa).

Disordered regions lie at residues 1-57 (MAAN…TSTD), 264-319 (EYPG…SEKQ), 334-424 (KAKE…SPSI), and 444-465 (ESCDGSSASEESPKRDPDSPMM). Over residues 264–273 (EYPGNQQGKS) the composition is skewed to polar residues. A compositionally biased stretch (basic and acidic residues) spans 334 to 361 (KAKEGTKRFSSETNDEKQSRSFHAEKQD). Polar residues predominate over residues 363–383 (TVMSTEATSASHYTKASSAES). Residues 566 to 752 (AIDLLYWRDV…AKIPGTKQKE (187 aa)) form the Reticulon domain. 2 helical membrane passes run 580 to 600 (IVFGSILLMLFSLTLFSVVSV) and 684 to 704 (VLMWLLTYVGALFNGLTLLIM).

In terms of tissue distribution, isoform A and isoform C are both expressed in the animal hemisphere (presumptive neural ectoderm) of blastula and gastrula stage embryos, and along the anterior neural border, in the panplacodal primordium, and in the dorsolateral side of archenteron roof of late neurula embryos. At the tailbud stage, expression of the isoforms begin to differ. Isoform A localizes to the cranial placodes including the trigeminal placode, lateral line placode, olfactory placode and otic vesicle. Isoform C localizes to the central nervous system, including the spinal cord, prosencephalon, mesencephalon and rhombencephalon, as well as the lateral line placode, otic vesicle and pronephros.

Its subcellular location is the endoplasmic reticulum membrane. The protein localises to the nucleus. Inhibits amyloid precursor protein processing, probably by blocking BACE1 activity. This chain is Reticulon-1-B (rtn1-b), found in Xenopus laevis (African clawed frog).